The primary structure comprises 117 residues: Protein Turandot F (117 aa).

An N-terminal signal peptide occupies residues M1–A22.

The protein belongs to the Turandot family.

It is found in the secreted. Its function is as follows. A humoral factor that may play a role in stress tolerance. This chain is Protein Turandot F, found in Drosophila sechellia (Fruit fly).